The primary structure comprises 210 residues: Small ribosomal subunit protein uS3 (210 aa).

Residues 38–106 enclose the KH type-2 domain; it reads IRAWLKKRLA…EVQINIVEIR (69 aa).

This sequence belongs to the universal ribosomal protein uS3 family. In terms of assembly, part of the 30S ribosomal subunit. Forms a tight complex with proteins S10 and S14.

Functionally, binds the lower part of the 30S subunit head. Binds mRNA in the 70S ribosome, positioning it for translation. The polypeptide is Small ribosomal subunit protein uS3 (Magnetococcus marinus (strain ATCC BAA-1437 / JCM 17883 / MC-1)).